The following is a 236-amino-acid chain: 7-cyano-7-deazaguanine synthase (236 aa).

ATP is bound at residue 7 to 17 (CSGGLDSVSLA). Residues C185, C193, C196, and C199 each contribute to the Zn(2+) site.

This sequence belongs to the QueC family. Requires Zn(2+) as cofactor.

It carries out the reaction 7-carboxy-7-deazaguanine + NH4(+) + ATP = 7-cyano-7-deazaguanine + ADP + phosphate + H2O + H(+). Its pathway is purine metabolism; 7-cyano-7-deazaguanine biosynthesis. Functionally, catalyzes the ATP-dependent conversion of 7-carboxy-7-deazaguanine (CDG) to 7-cyano-7-deazaguanine (preQ(0)). This chain is 7-cyano-7-deazaguanine synthase, found in Rhizobium etli (strain ATCC 51251 / DSM 11541 / JCM 21823 / NBRC 15573 / CFN 42).